Reading from the N-terminus, the 274-residue chain is Large ribosomal subunit protein uL2 (274 aa).

Disordered regions lie at residues Lys38–Gly57 and Ala224–Lys256. Positions Asp229–Asn239 are enriched in basic and acidic residues.

The protein belongs to the universal ribosomal protein uL2 family. In terms of assembly, part of the 50S ribosomal subunit. Forms a bridge to the 30S subunit in the 70S ribosome.

Its function is as follows. One of the primary rRNA binding proteins. Required for association of the 30S and 50S subunits to form the 70S ribosome, for tRNA binding and peptide bond formation. It has been suggested to have peptidyltransferase activity; this is somewhat controversial. Makes several contacts with the 16S rRNA in the 70S ribosome. In Acinetobacter baumannii (strain AB307-0294), this protein is Large ribosomal subunit protein uL2.